The following is a 475-amino-acid chain: Ribulose bisphosphate carboxylase large chain (475 aa).

Residues 1 to 2 constitute a propeptide that is removed on maturation; that stretch reads MS. Pro-3 is modified (N-acetylproline). The substrate site is built by Thr-65, Asn-123, and Thr-173. Lys-175 acts as the Proton acceptor in catalysis. Position 177 (Lys-177) interacts with substrate. The Mg(2+) site is built by Lys-201, Asp-203, and Glu-204. N6-carboxylysine is present on Lys-201. Positions 204, 294, 295, 327, 334, 379, 381, 403, and 404 each coordinate substrate. His-294 acts as the Proton acceptor in catalysis.

It belongs to the RuBisCO large chain family. Type I subfamily. As to quaternary structure, heterohexadecamer of 8 large chains and 8 small chains. Mg(2+) serves as cofactor. The disulfide bond which can form between Cys-247 in the large chain dimeric partners within the hexadecamer appears to be associated with oxidative stress and protein turnover. The disulfide bonds reported in 1RBO may be the result of oxidation during crystallization.

The protein resides in the plastid. It is found in the chloroplast. It carries out the reaction 2 (2R)-3-phosphoglycerate + 2 H(+) = D-ribulose 1,5-bisphosphate + CO2 + H2O. It catalyses the reaction D-ribulose 1,5-bisphosphate + O2 = 2-phosphoglycolate + (2R)-3-phosphoglycerate + 2 H(+). Its activity is regulated as follows. Abscisic acid (ABA) causes weak inhibition of RuBisCO catalytic activity, but more potent inhibition of RuBisCO activation. RuBisCO catalyzes two reactions: the carboxylation of D-ribulose 1,5-bisphosphate, the primary event in carbon dioxide fixation, as well as the oxidative fragmentation of the pentose substrate in the photorespiration process. Both reactions occur simultaneously and in competition at the same active site. Binds to abscisic acid (ABA) which has weakly inhibits carboxylation and more strongly inhibits enzyme activation. This chain is Ribulose bisphosphate carboxylase large chain, found in Spinacia oleracea (Spinach).